The chain runs to 269 residues: 4-hydroxy-tetrahydrodipicolinate reductase (269 aa).

Residues 10 to 15, Glu-36, 99 to 101, and 123 to 126 each bind NAD(+); these read GANGRM, GTT, and AANF. His-156 serves as the catalytic Proton donor/acceptor. His-157 is a binding site for (S)-2,3,4,5-tetrahydrodipicolinate. Lys-160 acts as the Proton donor in catalysis. 166–167 lines the (S)-2,3,4,5-tetrahydrodipicolinate pocket; sequence GT.

It belongs to the DapB family.

It is found in the cytoplasm. It catalyses the reaction (S)-2,3,4,5-tetrahydrodipicolinate + NAD(+) + H2O = (2S,4S)-4-hydroxy-2,3,4,5-tetrahydrodipicolinate + NADH + H(+). It carries out the reaction (S)-2,3,4,5-tetrahydrodipicolinate + NADP(+) + H2O = (2S,4S)-4-hydroxy-2,3,4,5-tetrahydrodipicolinate + NADPH + H(+). It functions in the pathway amino-acid biosynthesis; L-lysine biosynthesis via DAP pathway; (S)-tetrahydrodipicolinate from L-aspartate: step 4/4. In terms of biological role, catalyzes the conversion of 4-hydroxy-tetrahydrodipicolinate (HTPA) to tetrahydrodipicolinate. This chain is 4-hydroxy-tetrahydrodipicolinate reductase, found in Neisseria meningitidis serogroup B (strain ATCC BAA-335 / MC58).